The sequence spans 691 residues: Kinetochore protein NDC80 (691 aa).

The segment at 1–95 (MQSSTSTDQH…LNDKSNSRNS (95 aa)) is disordered. Residues 10 to 19 (HVLHHMDPHR) are compositionally biased toward basic and acidic residues. The segment covering 20-42 (FTSQIPTATSSQLRRRNSTNQGL) has biased composition (polar residues). Thr-38 carries the phosphothreonine modification. Over residues 54 to 65 (TISGTGIPTGGI) the composition is skewed to low complexity. Position 248 is a phosphothreonine (Thr-248). Coiled-coil stretches lie at residues 376 to 446 (GKLE…SIKS) and 522 to 686 (KKSI…FETE).

Belongs to the NDC80/HEC1 family. Component of the NDC80 complex, which consists of NDC80, NUF2, SPC24 and SPC25. The NDC80 complex is formed by two subcomplexes, NDC80-NUF2 and SPC24-SPC25, which are joined end-to-end through their coiled-coil domains. It has a rod-like structure with a length of 570 Angstroms and globular domains at either end. The NDC80-NUF2 globular domains are probably directed to microtubules, the SPC24-SPC25 globular domains to the centromere. NDC80 probably interacts with SMC1 and SMC2. Also interacts with KIN3. Interacts with DMC1.

The protein localises to the nucleus. The protein resides in the chromosome. It localises to the centromere. Its subcellular location is the kinetochore. Its function is as follows. Acts as a component of the essential kinetochore-associated NDC80 complex, which is involved in chromosome segregation and spindle checkpoint activity. The sequence is that of Kinetochore protein NDC80 from Saccharomyces cerevisiae (strain ATCC 204508 / S288c) (Baker's yeast).